The sequence spans 603 residues: Proline--tRNA ligase (603 aa).

It belongs to the class-II aminoacyl-tRNA synthetase family. ProS type 1 subfamily. As to quaternary structure, homodimer.

The protein resides in the cytoplasm. It catalyses the reaction tRNA(Pro) + L-proline + ATP = L-prolyl-tRNA(Pro) + AMP + diphosphate. In terms of biological role, catalyzes the attachment of proline to tRNA(Pro) in a two-step reaction: proline is first activated by ATP to form Pro-AMP and then transferred to the acceptor end of tRNA(Pro). As ProRS can inadvertently accommodate and process non-cognate amino acids such as alanine and cysteine, to avoid such errors it has two additional distinct editing activities against alanine. One activity is designated as 'pretransfer' editing and involves the tRNA(Pro)-independent hydrolysis of activated Ala-AMP. The other activity is designated 'posttransfer' editing and involves deacylation of mischarged Ala-tRNA(Pro). The misacylated Cys-tRNA(Pro) is not edited by ProRS. This is Proline--tRNA ligase from Paenarthrobacter aurescens (strain TC1).